The primary structure comprises 470 residues: Mitogen-activated protein kinase 15 (470 aa).

One can recognise a Protein kinase domain in the interval 13 to 306 (FDLQKRLGKG…VEQCLVHPYV (294 aa)). ATP is bound by residues 19 to 27 (LGKGAYGIV) and lysine 42. Aspartate 137 serves as the catalytic Proton acceptor. Residue threonine 178 is modified to Phosphothreonine. A TXY motif is present at residues 178-180 (TEY). At tyrosine 180 the chain carries Phosphotyrosine. The interval 362–445 (PYGEDKSRAP…PSSIKQRRRS (84 aa)) is disordered. Residues 394-406 (MDKNNSSSHDSSS) are compositionally biased toward low complexity. Residues 409 to 426 (LRERAASAESRTSKDSNG) show a composition bias toward basic and acidic residues.

This sequence belongs to the protein kinase superfamily. CMGC Ser/Thr protein kinase family. MAP kinase subfamily. Requires Mg(2+) as cofactor. In terms of processing, dually phosphorylated on Thr-178 and Tyr-180, which activates the enzyme. In terms of tissue distribution, expressed in the URX neuron and in many other head sensory neurons. Isoform a: Expressed in head and tail ciliated sensory neurons, and in mid-body neurons. Isoform c: Expressed in head and tail ciliated sensory neurons, and in mid-body neurons.

The protein localises to the cell projection. It localises to the cilium. Its subcellular location is the cilium membrane. It is found in the cytoplasm. The protein resides in the cytoskeleton. The protein localises to the cilium axoneme. It localises to the cilium basal body. Its subcellular location is the cell junction. It is found in the perikaryon. The protein resides in the dendrite. It carries out the reaction L-seryl-[protein] + ATP = O-phospho-L-seryl-[protein] + ADP + H(+). The enzyme catalyses L-threonyl-[protein] + ATP = O-phospho-L-threonyl-[protein] + ADP + H(+). Activated by threonine and tyrosine phosphorylation. Atypical MAPK protein. Regulates primary cilium formation in sensory neurons and the localization of ciliary proteins involved in cilium structure, transport, and signaling. Acts in dopamine (DA) neurons to support synaptic membrane dat-1 availability via activation of rho-1 thereby sustaining normal levels of DA clearance. Plays a role in male mating behavior, probably in part through regulating the localization of the polycystin pkd-2. Functions postembryonically in the URX sensory neurons to constrain URX dendrite growth throughout lifetime, probably by restricting expansion of the subcellular sensory compartment at the dendrite ending. The chain is Mitogen-activated protein kinase 15 from Caenorhabditis elegans.